The sequence spans 178 residues: MSRIGNKVITLPAGVELAQNNGVVTVKGPKGELTREFPTAIEIRVEGAEVTLHRPNDSKEMKTIHGTSRANLNNMVVGVSEGFKKELEMRGVGYRAQLAGNKLTLAVGKSHPDEVVAPEGITFEVPTPTQIVVSGINKEVVGQTAAYIRSLRAPEPYKGKGIRYVGEFVRRKEGKTGK.

This sequence belongs to the universal ribosomal protein uL6 family. As to quaternary structure, part of the 50S ribosomal subunit.

This protein binds to the 23S rRNA, and is important in its secondary structure. It is located near the subunit interface in the base of the L7/L12 stalk, and near the tRNA binding site of the peptidyltransferase center. In Streptococcus suis (strain 05ZYH33), this protein is Large ribosomal subunit protein uL6.